Here is a 147-residue protein sequence, read N- to C-terminus: UPF0260 protein Ent638_2368 (147 aa).

Belongs to the UPF0260 family.

In Enterobacter sp. (strain 638), this protein is UPF0260 protein Ent638_2368.